The sequence spans 76 residues: Small ribosomal subunit protein bS18 (76 aa).

The protein belongs to the bacterial ribosomal protein bS18 family. Part of the 30S ribosomal subunit. Forms a tight heterodimer with protein bS6.

Functionally, binds as a heterodimer with protein bS6 to the central domain of the 16S rRNA, where it helps stabilize the platform of the 30S subunit. This chain is Small ribosomal subunit protein bS18, found in Xanthomonas euvesicatoria pv. vesicatoria (strain 85-10) (Xanthomonas campestris pv. vesicatoria).